The primary structure comprises 219 residues: Thiamine-phosphate synthase (219 aa).

4-amino-2-methyl-5-(diphosphooxymethyl)pyrimidine-binding positions include 44 to 48 (QFREK) and Asn79. The Mg(2+) site is built by Asp80 and Asp99. Ser117 is a binding site for 4-amino-2-methyl-5-(diphosphooxymethyl)pyrimidine. 2-[(2R,5Z)-2-carboxy-4-methylthiazol-5(2H)-ylidene]ethyl phosphate is bound at residue 143-145 (TST). Residue Lys146 coordinates 4-amino-2-methyl-5-(diphosphooxymethyl)pyrimidine. 2-[(2R,5Z)-2-carboxy-4-methylthiazol-5(2H)-ylidene]ethyl phosphate-binding positions include Gly175 and 195-196 (IS).

It belongs to the thiamine-phosphate synthase family. Mg(2+) is required as a cofactor.

It catalyses the reaction 2-[(2R,5Z)-2-carboxy-4-methylthiazol-5(2H)-ylidene]ethyl phosphate + 4-amino-2-methyl-5-(diphosphooxymethyl)pyrimidine + 2 H(+) = thiamine phosphate + CO2 + diphosphate. The catalysed reaction is 2-(2-carboxy-4-methylthiazol-5-yl)ethyl phosphate + 4-amino-2-methyl-5-(diphosphooxymethyl)pyrimidine + 2 H(+) = thiamine phosphate + CO2 + diphosphate. The enzyme catalyses 4-methyl-5-(2-phosphooxyethyl)-thiazole + 4-amino-2-methyl-5-(diphosphooxymethyl)pyrimidine + H(+) = thiamine phosphate + diphosphate. It participates in cofactor biosynthesis; thiamine diphosphate biosynthesis; thiamine phosphate from 4-amino-2-methyl-5-diphosphomethylpyrimidine and 4-methyl-5-(2-phosphoethyl)-thiazole: step 1/1. Its function is as follows. Condenses 4-methyl-5-(beta-hydroxyethyl)thiazole monophosphate (THZ-P) and 2-methyl-4-amino-5-hydroxymethyl pyrimidine pyrophosphate (HMP-PP) to form thiamine monophosphate (TMP). This Bacillus cereus (strain 03BB102) protein is Thiamine-phosphate synthase.